The sequence spans 277 residues: MGIRSYKAYTPGTRNRSVSQFEEIVQSKPEKQLTSGQHRKKGRNNRGVITSRHRGGGHKRLYRHIDFKRDKYGMLGRIVSIEYDPNRNARICLISYQDGEKRYILHPRGISIGDQILSDTHAPISPGNALPLTNMPLGTTIHNIELQPGKGGQVARAAGAIAKIIAKEGKFATLRLPSGEVRLVLQQCLATIGQVGNVDANNQSIGKAGSKRWLGRRPTVRGVVMNAADHPHGGGEGRAPIGRKRPLTPWGRPTLGRKSRSRHKYSEALILRRRKNA.

Disordered stretches follow at residues isoleucine 24 to glycine 57 and asparagine 226 to serine 266.

This sequence belongs to the universal ribosomal protein uL2 family. In terms of assembly, part of the 50S ribosomal subunit.

It is found in the plastid. Its subcellular location is the chloroplast. The polypeptide is Large ribosomal subunit protein uL2c (rpl2) (Zygnema circumcarinatum (Green alga)).